The primary structure comprises 598 residues: Elongation factor 4 (598 aa).

Residues 2–184 form the tr-type G domain; the sequence is QHIRNFSIIA…AIVARVPAPK (183 aa). GTP is bound by residues 14–19 and 131–134; these read DHGKST and NKID.

Belongs to the TRAFAC class translation factor GTPase superfamily. Classic translation factor GTPase family. LepA subfamily.

The protein resides in the cell inner membrane. The catalysed reaction is GTP + H2O = GDP + phosphate + H(+). Required for accurate and efficient protein synthesis under certain stress conditions. May act as a fidelity factor of the translation reaction, by catalyzing a one-codon backward translocation of tRNAs on improperly translocated ribosomes. Back-translocation proceeds from a post-translocation (POST) complex to a pre-translocation (PRE) complex, thus giving elongation factor G a second chance to translocate the tRNAs correctly. Binds to ribosomes in a GTP-dependent manner. This Azoarcus sp. (strain BH72) protein is Elongation factor 4.